A 359-amino-acid polypeptide reads, in one-letter code: Medium-wave-sensitive opsin 1 (359 aa).

Topologically, residues 1 to 47 (MAQRLTGEQTLDHYEDSTHASIFTYTNSNSTKGPFEGPNYHIAPRWV) are extracellular. The tract at residues 12-38 (DHYEDSTHASIFTYTNSNSTKGPFEGP) is required for 11-cis-retinal regeneration. The N-linked (GlcNAc...) asparagine glycan is linked to Asn-29. The helical transmembrane segment at 48–72 (YHLTSTWMILVVVASVFTNGLVLAA) threads the bilayer. The Cytoplasmic segment spans residues 73-84 (TMRFKKLRHPLN). The helical transmembrane segment at 85 to 110 (WILVNLAVADLAETIIASTISVVNQI) threads the bilayer. The Extracellular segment spans residues 111–124 (YGYFVLGHPLCVIE). Cys-121 and Cys-198 form a disulfide bridge. The helical transmembrane segment at 125 to 144 (GYIVSLCGITGLWSLAIISW) threads the bilayer. At 145-163 (ERWLVVCKPFGNVRFDAKL) the chain is on the cytoplasmic side. Residues 164 to 187 (ATVGIVFSWVWAAIWTAPPIFGWS) form a helical membrane-spanning segment. Residues 188–213 (RYWPYGLKTSCGPDVFSGTSYPGVQS) lie on the Extracellular side of the membrane. Residues 214–241 (YMMVLMVTCCIFPLSIIVLCYLQVWLAI) form a helical membrane-spanning segment. Residues 242–263 (RAVAKQQKESESTQKAEKEVTR) lie on the Cytoplasmic side of the membrane. The helical transmembrane segment at 264-287 (MVVVMVFAYCLCWGPYTFFACFAT) threads the bilayer. Residues 288–295 (AHPGYAFH) are Extracellular-facing. Residues 296 to 320 (PLVASLPSYFAKSATIYNPIIYVFM) traverse the membrane as a helical segment. Residue Lys-307 is modified to N6-(retinylidene)lysine. The Cytoplasmic segment spans residues 321-359 (NRQFRNCILHLFGKKVDDSSELSSTSKTEVSSVSSVSPA).

Belongs to the G-protein coupled receptor 1 family. Opsin subfamily. Monomer. Homodimer. Homotetramer. In terms of processing, N-glycosylated. O-glycosylated. Post-translationally, phosphorylated on some or all of the serine and threonine residues present in the C-terminal region. As to expression, expressed in retina (at protein level). Expressed in cone photoreceptor cells (at protein level).

The protein resides in the cell membrane. Its function is as follows. Visual pigments are the light-absorbing molecules that mediate vision. They consist of an apoprotein, opsin, covalently linked to cis-retinal. May increase spectral sensitivity in dim light. The chain is Medium-wave-sensitive opsin 1 (Opn1mw) from Mus musculus (Mouse).